Reading from the N-terminus, the 236-residue chain is uncharacterized protein (236 aa).

It to M.tuberculosis Rv2557.

This is an uncharacterized protein from Mycobacterium tuberculosis (strain CDC 1551 / Oshkosh).